We begin with the raw amino-acid sequence, 773 residues long: E3 ubiquitin-protein ligase msl-2 (773 aa).

Zn(2+)-binding residues include Cys41, Cys44, Cys59, His61, Cys64, Cys67, Cys78, and Cys84. The RING-type zinc finger occupies 41-85 (CVVCCQLLVDPYSPKGKRCQHNVCRLCLRGKKHLFPSCTQCEGCS). Residues 424–468 (VQTELQDAESLQKDFEDAKAAAEEAKEKEKDLHAISAELQKEDSD) adopt a coiled-coil conformation. Residues 460-525 (AELQKEDSDE…EKVKPPKPKC (66 aa)) form a disordered region. A CXC MSL2-type domain is found at 520–571 (PPKPKCRCGISGSSNTLTTCRNSRCPCYKSYNSCAGCHCVCCKNPHKEDYVE). Zn(2+)-binding residues include Cys525, Cys527, Cys539, Cys544, Cys546, Cys553, Cys556, Cys558, and Cys561. Residues 571 to 773 (ESDEDDDLED…EEIMSGSDDL (203 aa)) form a C-terminal disordered region (CTD) region. Residues 572–581 (SDEDDDLEDF) show a composition bias toward acidic residues. The disordered stretch occupies residues 572–616 (SDEDDDLEDFEMPKDVPEPMTQSEEPVVAEPRQEENSMAPPDSSA). A clamp-binding domain (CBD) region spans residues 620 to 685 (LVPLNNLQQS…SLPQYAYIMP (66 aa)). A pro/Bas region region spans residues 650 to 708 (QGSKPLDPVTVGFTIRVQLQHTDGFGSLPQYAYIMPTIDPPNPPAPSLSPPPPPAPDRE). Pro residues predominate over residues 687-704 (IDPPNPPAPSLSPPPPPA). The disordered stretch occupies residues 687 to 773 (IDPPNPPAPS…EEIMSGSDDL (87 aa)). Over residues 705–714 (PDREVIEPPA) the composition is skewed to basic and acidic residues. The segment covering 715-726 (KKFRTSRTRRGR) has biased composition (basic residues). The segment covering 742 to 759 (GSRSNSAAGDRSSATDNA) has biased composition (polar residues).

This sequence belongs to the MSL2 family. As to quaternary structure, component of the male-specific lethal (MSL) histone acetyltransferase complex, composed of mof, mle, msl-1, msl-2 and msl-3 proteins, as well as roX1 and roX2 non-coding RNAs. When not associated with chromatin, the MSL complex associates with msl-2 mRNAs, possibly to regulate the amount of available MSL complex. Interacts with Clamp; promoting cooperative binding to DNA PionX sites and recruitment of the MSL complex to chromatin. Post-translationally, autoubiquitinated.

It is found in the nucleus. The protein localises to the chromosome. It carries out the reaction S-ubiquitinyl-[E2 ubiquitin-conjugating enzyme]-L-cysteine + [acceptor protein]-L-lysine = [E2 ubiquitin-conjugating enzyme]-L-cysteine + N(6)-ubiquitinyl-[acceptor protein]-L-lysine.. Its pathway is protein modification; protein ubiquitination. Limiting component of the male-specific lethal (MSL) histone acetyltransferase complex, a multiprotein complex essential for elevating transcription of the single X chromosome in the male (X chromosome dosage compensation). The MSL complex specifically associates with the single X chromosome in males and mediates formation of H4K16ac, promoting a two-fold activation of X chromosome. Msl-2 is only produced in males, constituting the limiting component of the MSL complex. Within the MSL complex, msl-2 mediates the selective binding to the X chromosome and recruitment of the MSL complex via two different mechanisms. Recognizes DNA motifs that are enriched on X chromosome, named PionX sites, which are characterized by sequence features and distinct DNA conformation (base roll). Specific recognition of the X chromosome is also mediated by the formation of a gel-like state: msl-2 undergoes liquid-liquid phase separation upon binding to roX1 and roX2 non-coding RNAs, leading to nucleate the MSL complex on the X chromosome. Msl-2 is also required for translation and/or stability of msl-1 in males. Also acts as an E3 ubiquitin ligase: in complex with msl-1, mediates ubiquitination of histone H2B at 'Lys-34' (H2BK34Ub). Also catalyzes ubiquitination of msl-1, msl-3 and mof components of the MSL complex. In Drosophila melanogaster (Fruit fly), this protein is E3 ubiquitin-protein ligase msl-2.